The chain runs to 61 residues: Sec-independent protein translocase protein TatA (61 aa).

Residues Met1–Gly21 form a helical membrane-spanning segment.

It belongs to the TatA/E family. In terms of assembly, the Tat system comprises two distinct complexes: a TatABC complex, containing multiple copies of TatA, TatB and TatC subunits, and a separate TatA complex, containing only TatA subunits. Substrates initially bind to the TatABC complex, which probably triggers association of the separate TatA complex to form the active translocon.

Its subcellular location is the cell inner membrane. Functionally, part of the twin-arginine translocation (Tat) system that transports large folded proteins containing a characteristic twin-arginine motif in their signal peptide across membranes. TatA could form the protein-conducting channel of the Tat system. The sequence is that of Sec-independent protein translocase protein TatA from Syntrophus aciditrophicus (strain SB).